The chain runs to 457 residues: Cysteine--tRNA ligase (457 aa).

Cysteine 27 lines the Zn(2+) pocket. The 'HIGH' region motif lies at 29-39 (PTVYDFAHIGN). Cysteine 211, histidine 236, and glutamate 240 together coordinate Zn(2+). The 'KMSKS' region motif lies at 269-273 (KMSKS). Lysine 272 serves as a coordination point for ATP.

The protein belongs to the class-I aminoacyl-tRNA synthetase family. As to quaternary structure, monomer. Zn(2+) is required as a cofactor.

It localises to the cytoplasm. The catalysed reaction is tRNA(Cys) + L-cysteine + ATP = L-cysteinyl-tRNA(Cys) + AMP + diphosphate. This Ehrlichia ruminantium (strain Gardel) protein is Cysteine--tRNA ligase.